We begin with the raw amino-acid sequence, 1440 residues long: Glucose transporter type 1 (1440 aa).

The first 23 residues, 1–23 (MAFLCAPGLTFFLTYSIFSAVLG), serve as a signal peptide directing secretion. The Cytoplasmic portion of the chain corresponds to 24 to 67 (MLQFGYNTGVINAPEKNIENFMKDVYKDRYGEDISEEFIQQLYS). The helical transmembrane segment at 68-88 (VAVSIFAIGGMLGGFSGGWMA) threads the bilayer. Topologically, residues 89 to 95 (NRFGRKG) are extracellular. The chain crosses the membrane as a helical span at residues 96 to 116 (GLLLNNVLGIAGACLMGFTKV). Residues 117–127 (SHSYEMLFLGR) are Cytoplasmic-facing. Residues 128-148 (FIIGVNCGLNTSLVPMYISEI) form a helical membrane-spanning segment. Residues 149–162 (APLNLRGGLGTVNQ) are Extracellular-facing. Residue Gln162 participates in D-glucose binding. Residues 163–183 (LAVTVGLLLSQVLGIEQILGT) traverse the membrane as a helical segment. Residues 184-186 (NEG) are Cytoplasmic-facing. The chain crosses the membrane as a helical span at residues 187–207 (WPILLGLAICPAILQLILLPV). The Extracellular portion of the chain corresponds to 208-272 (CPESPRYLLI…LICSPTLRPP (65 aa)). The chain crosses the membrane as a helical span at residues 273-293 (LIIGIVMQLSQQFSGINAVFY). Residues 283-284 (QQ) and Asn289 contribute to the D-glucose site. At 294–310 (YSTSLFMSSGLTEESAK) the chain is on the cytoplasmic side. The helical transmembrane segment at 311–331 (FATIGIGAIMVVMTLVSIPLM) threads the bilayer. The Extracellular portion of the chain corresponds to 332-339 (DRTGRRTL). A helical transmembrane segment spans residues 340 to 360 (HLYGLGGMFIFSIFITISFLI). At 361-372 (KEMIDWMSYLSV) the chain is on the cytoplasmic side. The helical transmembrane segment at 373-393 (VATLGFVVFFAVGPGSIPWMI) threads the bilayer. Trp391 lines the D-glucose pocket. At 394 to 405 (TAELFSQGPRPS) the chain is on the extracellular side. Residues 406–426 (AMAIAVLVNWMANFVVGIGFP) form a helical membrane-spanning segment. Over 427–429 (SMK) the chain is Cytoplasmic. Residues 430-450 (TALENYTFLPFSVFLAIFWIF) traverse the membrane as a helical segment. Topologically, residues 451–534 (TYKKVPETKN…GPYPLSDSTN (84 aa)) are extracellular. Asn460 and Asn480 each carry an N-linked (GlcNAc...) asparagine glycan. Residues 535-555 (LLGPGSSSYGPGGVLGLAGSG) form a helical membrane-spanning segment. Residues 556-1440 (SGLGGQCYTN…RKYTDFLRKK (885 aa)) are Cytoplasmic-facing. 6 disordered regions span residues 628-708 (ERFL…SRYA), 725-808 (QANP…HSVM), 966-987 (APEGSTLERQSSKGALGSSELP), 1000-1083 (FLAD…GSYH), 1304-1330 (LEGAGGGGASTTSEHSSSLPSPQPLTH), and 1380-1401 (ANSPHSQSHHSHAHTHTHGHHV). Polar residues predominate over residues 669–678 (PPDSASVRST). The span at 686–704 (QPQQVHHQQQQVHHQQQHQ) shows a compositional bias: low complexity. The segment covering 730–739 (QAPPQQPAPP) has biased composition (pro residues). Residues 754–789 (CQQRKHSHSPHHSRHTSPHSHHHHSHHSRHSRRSRR) are compositionally biased toward basic residues. A compositionally biased stretch (low complexity) spans 1313–1330 (STTSEHSSSLPSPQPLTH).

The protein belongs to the major facilitator superfamily. Sugar transporter (TC 2.A.1.1) family. Glucose transporter subfamily.

It localises to the membrane. Its function is as follows. Facilitative glucose transporter. This chain is Glucose transporter type 1 (Glut1), found in Drosophila melanogaster (Fruit fly).